The chain runs to 102 residues: Carboxysome shell protein CcmK3 (102 aa).

A BMC domain is found at 4-90 (AVGVIQTDGF…PPDNVETVMP (87 aa)).

It belongs to the bacterial microcompartments protein family. CcmK subfamily. As to quaternary structure, interacts stably with CcmK4, forming heterohexamers that can make dodecamers. Heterohexamers have a 1:2 CcmK3:CcmK4 stoichiometry. Upon expression in E.coli forms oligomers that could be dimers or trimers, but never hexamers; bulky residues in the pore region probably preclude the formation of homohexamers.

The protein resides in the carboxysome. Its function is as follows. A probably non-essential, minor shell protein of the carboxysome, a polyhedral inclusion where RuBisCO (ribulose bisphosphate carboxylase, rbcL-rbcS) is sequestered. Hexamers form sheets that form the facets of the polyhedral carboxysome. In PCC 7418 there are several CcmK paralogs with presumably functional differences. This subunit probably only makes heterohexamers with CcmK4. Heterohexamers can also make dodecamers, formation depends on buffer conditions. The polypeptide is Carboxysome shell protein CcmK3 (Halothece sp. (strain PCC 7418) (Synechococcus sp. (strain PCC 7418))).